The sequence spans 233 residues: Large ribosomal subunit protein uL1 (233 aa).

Belongs to the universal ribosomal protein uL1 family. In terms of assembly, part of the 50S ribosomal subunit.

In terms of biological role, binds directly to 23S rRNA. The L1 stalk is quite mobile in the ribosome, and is involved in E site tRNA release. Protein L1 is also a translational repressor protein, it controls the translation of the L11 operon by binding to its mRNA. The chain is Large ribosomal subunit protein uL1 from Syntrophomonas wolfei subsp. wolfei (strain DSM 2245B / Goettingen).